The chain runs to 152 residues: S-Adenosylmethionine lyase (152 aa).

As to quaternary structure, homotetramer. Interacts with host METK; this interaction induces the polymerization of METK into filaments that are enzymatically inactive.

It catalyses the reaction S-adenosyl-L-methionine = L-homoserine lactone + S-methyl-5'-thioadenosine. In terms of biological role, degrades the intracellular SAM pools of the host cell and inhibits the host S-adenosylmethionine synthase METK/MAT, thereby preventing methylation of the viral genome. Induces the polymerization of METK into filaments that are enzymatically inactive. Keeping the viral genome in an unmethylated state allows the phage to shift from a lytic infection under normal growth conditions to a transient lysogenic infection under glucose starvation, by blocking its own expression. Does not protect the virus immune against host restriction-modification systems. In Escherichia coli (Bacteriophage T3), this protein is S-Adenosylmethionine lyase.